We begin with the raw amino-acid sequence, 589 residues long: Protein kinase G11A (589 aa).

A disordered region spans residues 1-167 (MASKAMPRAP…SACSSISSVT (167 aa)). Polar residues-rich tracts occupy residues 15–36 (NLQSLKLCSQNDSSLETTSPSK) and 63–76 (TQHQNESIDLTGSN). The segment covering 91 to 100 (RLADEEKGVV) has biased composition (basic and acidic residues). The segment covering 142-165 (SSSRCRPSTSSDVSDESACSSISS) has biased composition (low complexity). One can recognise a Protein kinase domain in the interval 195 to 533 (FKLLKKLGCG…ATEIKQHPFF (339 aa)). Residues 201–209 (LGCGDIGSV) and lysine 224 each bind ATP. Aspartate 320 serves as the catalytic Proton acceptor. The disordered stretch occupies residues 551–589 (RPVEIERPPKQPVSTSEPAAAPSDAAQKSSDSYLEFDFF).

This sequence belongs to the protein kinase superfamily. Ser/Thr protein kinase family.

The catalysed reaction is L-seryl-[protein] + ATP = O-phospho-L-seryl-[protein] + ADP + H(+). It catalyses the reaction L-threonyl-[protein] + ATP = O-phospho-L-threonyl-[protein] + ADP + H(+). May play a role in the regulation of metabolism and signal transduction processes. The polypeptide is Protein kinase G11A (Oryza sativa subsp. japonica (Rice)).